We begin with the raw amino-acid sequence, 375 residues long: Antichymotrypsin-2 (375 aa).

Belongs to the serpin family. Hemolymph.

The protein resides in the secreted. The protein is Antichymotrypsin-2 of Bombyx mori (Silk moth).